We begin with the raw amino-acid sequence, 161 residues long: Anaerobic nitrite reductase Glb1-2 (161 aa).

Positions 9-158 (AFTEEQEALV…LASAIIAEMK (150 aa)) constitute a Globin domain. Residues 42–46 (EIAPP) carry the Homodimerization motif. Heme b contacts are provided by Ser52, Lys66, His70, Lys100, Thr104, and His105. The short motif at 112–124 (PEHFEVTKQALLD) is the Homodimerization element.

Belongs to the plant globin family. In terms of assembly, homodimer. The cofactor is heme b. As to expression, mainly expressed in root nodules and leaves, and, to a lower extent, in roots, stems, flowers and fruits. Accumulates in mature root nodules.

It carries out the reaction Fe(III)-heme b-[protein] + nitric oxide + H2O = Fe(II)-heme b-[protein] + nitrite + 2 H(+). In terms of biological role, phytoglobin that reduces nitrite to nitric oxide (NO) under anoxic conditions (e.g. during flooding or in waterlogged soil) and upon root nodulation. Required for general plant development and during nodulation, especially for the onset of symbiosis. Monitors nitric oxide (NO) levels during early phase of the nitrogen-fixing symbiosis and buffers oxygen in functioning nodules. Necessary for the production of pods. May not function as an oxygen storage or transport protein. Has an unusually high affinity for O(2) through a hexacoordinate heme iron because of a very low dissociation constant. This chain is Anaerobic nitrite reductase Glb1-2, found in Lotus japonicus (Lotus corniculatus var. japonicus).